The sequence spans 462 residues: Phosphoglucosamine mutase (462 aa).

S111 (phosphoserine intermediate) is an active-site residue. Mg(2+)-binding residues include S111, D250, D252, and D254. Phosphoserine is present on S111.

This sequence belongs to the phosphohexose mutase family. Mg(2+) is required as a cofactor. In terms of processing, activated by phosphorylation.

The enzyme catalyses alpha-D-glucosamine 1-phosphate = D-glucosamine 6-phosphate. In terms of biological role, catalyzes the conversion of glucosamine-6-phosphate to glucosamine-1-phosphate. The protein is Phosphoglucosamine mutase of Synechococcus sp. (strain WH7803).